The following is a 408-amino-acid chain: Imidazolonepropionase (408 aa).

Positions 73 and 75 each coordinate Fe(3+). Zn(2+)-binding residues include His73 and His75. 4-imidazolone-5-propanoate is bound by residues Arg82, Tyr145, and His178. Tyr145 contributes to the N-formimidoyl-L-glutamate binding site. Residue His243 participates in Fe(3+) binding. His243 is a binding site for Zn(2+). Gln246 provides a ligand contact to 4-imidazolone-5-propanoate. Position 318 (Asp318) interacts with Fe(3+). Asp318 is a binding site for Zn(2+). 2 residues coordinate N-formimidoyl-L-glutamate: Asn320 and Gly322. Ser323 provides a ligand contact to 4-imidazolone-5-propanoate.

The protein belongs to the metallo-dependent hydrolases superfamily. HutI family. Requires Zn(2+) as cofactor. It depends on Fe(3+) as a cofactor.

Its subcellular location is the cytoplasm. The enzyme catalyses 4-imidazolone-5-propanoate + H2O = N-formimidoyl-L-glutamate. The protein operates within amino-acid degradation; L-histidine degradation into L-glutamate; N-formimidoyl-L-glutamate from L-histidine: step 3/3. Functionally, catalyzes the hydrolytic cleavage of the carbon-nitrogen bond in imidazolone-5-propanoate to yield N-formimidoyl-L-glutamate. It is the third step in the universal histidine degradation pathway. The polypeptide is Imidazolonepropionase (Shewanella sp. (strain MR-4)).